The primary structure comprises 302 residues: Nucleotide-binding protein Bcep1808_2900 (302 aa).

Residue G8 to S15 participates in ATP binding. D57–S60 serves as a coordination point for GTP.

Belongs to the RapZ-like family.

Its function is as follows. Displays ATPase and GTPase activities. This is Nucleotide-binding protein Bcep1808_2900 from Burkholderia vietnamiensis (strain G4 / LMG 22486) (Burkholderia cepacia (strain R1808)).